A 294-amino-acid chain; its full sequence is NAD kinase (294 aa).

The active-site Proton acceptor is Asp74. NAD(+) contacts are provided by residues 74–75 (DG), 148–149 (NE), His159, Arg176, Asp178, 189–194 (TAYSLS), and Gln249.

It belongs to the NAD kinase family. Requires a divalent metal cation as cofactor.

It is found in the cytoplasm. The enzyme catalyses NAD(+) + ATP = ADP + NADP(+) + H(+). Functionally, involved in the regulation of the intracellular balance of NAD and NADP, and is a key enzyme in the biosynthesis of NADP. Catalyzes specifically the phosphorylation on 2'-hydroxyl of the adenosine moiety of NAD to yield NADP. The protein is NAD kinase of Vibrio vulnificus (strain YJ016).